The primary structure comprises 501 residues: Probable cytosol aminopeptidase (501 aa).

Residues Lys-268 and Asp-273 each coordinate Mn(2+). The active site involves Lys-280. Residues Asp-291, Asp-350, and Glu-352 each coordinate Mn(2+). Arg-354 is an active-site residue.

The protein belongs to the peptidase M17 family. Mn(2+) serves as cofactor.

It is found in the cytoplasm. The enzyme catalyses Release of an N-terminal amino acid, Xaa-|-Yaa-, in which Xaa is preferably Leu, but may be other amino acids including Pro although not Arg or Lys, and Yaa may be Pro. Amino acid amides and methyl esters are also readily hydrolyzed, but rates on arylamides are exceedingly low.. The catalysed reaction is Release of an N-terminal amino acid, preferentially leucine, but not glutamic or aspartic acids.. Its function is as follows. Presumably involved in the processing and regular turnover of intracellular proteins. Catalyzes the removal of unsubstituted N-terminal amino acids from various peptides. In Nitrosococcus oceani (strain ATCC 19707 / BCRC 17464 / JCM 30415 / NCIMB 11848 / C-107), this protein is Probable cytosol aminopeptidase.